We begin with the raw amino-acid sequence, 208 residues long: Large ribosomal subunit protein uL4 (208 aa).

Residues 45 to 96 (RQGTHKSKTRAEVRGGGRKPYRQKGTGNARQGSTRSPLMVGGGTIFGPTPHG) form a disordered region. Over residues 69–80 (GTGNARQGSTRS) the composition is skewed to polar residues.

Belongs to the universal ribosomal protein uL4 family. As to quaternary structure, part of the 50S ribosomal subunit.

One of the primary rRNA binding proteins, this protein initially binds near the 5'-end of the 23S rRNA. It is important during the early stages of 50S assembly. It makes multiple contacts with different domains of the 23S rRNA in the assembled 50S subunit and ribosome. Its function is as follows. Forms part of the polypeptide exit tunnel. This Chlorobium phaeovibrioides (strain DSM 265 / 1930) (Prosthecochloris vibrioformis (strain DSM 265)) protein is Large ribosomal subunit protein uL4.